The sequence spans 348 residues: Histidinol-phosphate aminotransferase (348 aa).

An N6-(pyridoxal phosphate)lysine modification is found at lysine 211.

Belongs to the class-II pyridoxal-phosphate-dependent aminotransferase family. Histidinol-phosphate aminotransferase subfamily. In terms of assembly, homodimer. Pyridoxal 5'-phosphate is required as a cofactor.

The catalysed reaction is L-histidinol phosphate + 2-oxoglutarate = 3-(imidazol-4-yl)-2-oxopropyl phosphate + L-glutamate. The protein operates within amino-acid biosynthesis; L-histidine biosynthesis; L-histidine from 5-phospho-alpha-D-ribose 1-diphosphate: step 7/9. The sequence is that of Histidinol-phosphate aminotransferase from Chlorobaculum tepidum (strain ATCC 49652 / DSM 12025 / NBRC 103806 / TLS) (Chlorobium tepidum).